The primary structure comprises 460 residues: Squalene synthase (460 aa).

The chain crosses the membrane as a helical span at residues 425–445; the sequence is ISILFVFFIILVCLAVIFYVF.

It belongs to the phytoene/squalene synthase family. As to quaternary structure, interacts with pof14. It depends on Mg(2+) as a cofactor.

The protein resides in the endoplasmic reticulum membrane. It catalyses the reaction 2 (2E,6E)-farnesyl diphosphate + NADPH + H(+) = squalene + 2 diphosphate + NADP(+). The enzyme catalyses 2 (2E,6E)-farnesyl diphosphate + NADH + H(+) = squalene + 2 diphosphate + NAD(+). It participates in terpene metabolism; lanosterol biosynthesis; lanosterol from farnesyl diphosphate: step 1/3. It functions in the pathway steroid metabolism; ergosterol biosynthesis. Squalene synthase; part of the third module of ergosterol biosynthesis pathway that includes by the late steps of the pathway. Erg9 produces squalene from 2 farnesyl pyrophosphate moieties. The third module or late pathway involves the ergosterol synthesis itself through consecutive reactions that mainly occur in the endoplasmic reticulum (ER) membrane. Firstly, the squalene synthase erg9 catalyzes the condensation of 2 farnesyl pyrophosphate moieties to form squalene, which is the precursor of all steroids. Secondly, squalene is converted into lanosterol by the consecutive action of the squalene epoxidase erg1 and the lanosterol synthase erg7. The lanosterol 14-alpha-demethylase erg11/cyp1 catalyzes C14-demethylation of lanosterol to produce 4,4'-dimethyl cholesta-8,14,24-triene-3-beta-ol. In the next steps, a complex process involving various demethylation, reduction and desaturation reactions catalyzed by the C-14 reductase erg24 and the C-4 demethylation complex erg25-erg26-erg27 leads to the production of zymosterol. Erg28 likely functions in the C-4 demethylation complex reaction by tethering erg26 and Erg27 to the endoplasmic reticulum or to facilitate interaction between these proteins. Then, the sterol 24-C-methyltransferase erg6 catalyzes the methyl transfer from S-adenosyl-methionine to the C-24 of zymosterol to form fecosterol. The C-8 sterol isomerase erg2 catalyzes the reaction which results in unsaturation at C-7 in the B ring of sterols and thus converts fecosterol to episterol. The sterol-C5-desaturases erg31 and erg32 then catalyze the introduction of a C-5 double bond in the B ring to produce 5-dehydroepisterol. The C-22 sterol desaturase erg5 further converts 5-dehydroepisterol into ergosta-5,7,22,24(28)-tetraen-3beta-ol by forming the C-22(23) double bond in the sterol side chain. Finally, ergosta-5,7,22,24(28)-tetraen-3beta-ol is substrate of the C-24(28) sterol reductase erg4 to produce ergosterol. In the genus Schizosaccharomyces, a second route exists between lanosterol and fecosterol, via the methylation of lanosterol to eburicol by erg6, followed by C14-demethylation by erg11/cyp1 and C4-demethylation by the demethylation complex erg25-erg26-erg27. In Schizosaccharomyces pombe (strain 972 / ATCC 24843) (Fission yeast), this protein is Squalene synthase.